The sequence spans 130 residues: Small ribosomal subunit protein uS11 (130 aa).

Residues isoleucine 111–alanine 130 are disordered.

It belongs to the universal ribosomal protein uS11 family. In terms of assembly, part of the 30S ribosomal subunit. Interacts with proteins S7 and S18. Binds to IF-3.

Located on the platform of the 30S subunit, it bridges several disparate RNA helices of the 16S rRNA. Forms part of the Shine-Dalgarno cleft in the 70S ribosome. The protein is Small ribosomal subunit protein uS11 of Lactobacillus acidophilus (strain ATCC 700396 / NCK56 / N2 / NCFM).